A 429-amino-acid polypeptide reads, in one-letter code: Adenylosuccinate synthetase (429 aa).

GTP is bound by residues 12 to 18 (GDEGKGK) and 40 to 42 (GHT). The active-site Proton acceptor is aspartate 13. Residues aspartate 13 and glycine 40 each coordinate Mg(2+). Residues 13–16 (DEGK), 38–41 (NAGH), threonine 129, arginine 143, glutamine 223, threonine 238, and arginine 302 contribute to the IMP site. Histidine 41 acts as the Proton donor in catalysis. A substrate-binding site is contributed by 298 to 304 (VVTGRKR). Residues arginine 304, 330–332 (KLD), and 412–414 (STS) each bind GTP.

This sequence belongs to the adenylosuccinate synthetase family. In terms of assembly, homodimer. It depends on Mg(2+) as a cofactor.

It localises to the cytoplasm. It carries out the reaction IMP + L-aspartate + GTP = N(6)-(1,2-dicarboxyethyl)-AMP + GDP + phosphate + 2 H(+). The protein operates within purine metabolism; AMP biosynthesis via de novo pathway; AMP from IMP: step 1/2. Functionally, plays an important role in the de novo pathway of purine nucleotide biosynthesis. Catalyzes the first committed step in the biosynthesis of AMP from IMP. In Bartonella bacilliformis (strain ATCC 35685 / KC583 / Herrer 020/F12,63), this protein is Adenylosuccinate synthetase.